Here is a 384-residue protein sequence, read N- to C-terminus: Bifunctional enzyme IspD/IspF (384 aa).

The interval 1–226 (MAKTVVLVVA…RCLFDGPGEV (226 aa)) is 2-C-methyl-D-erythritol 4-phosphate cytidylyltransferase. A 2-C-methyl-D-erythritol 2,4-cyclodiphosphate synthase region spans residues 227–384 (RSASGYDVHR…QAMASVWLPR (158 aa)). A divalent metal cation-binding residues include D233 and H235. 4-CDP-2-C-methyl-D-erythritol 2-phosphate contacts are provided by residues 233–235 (DVH) and 260–261 (HS). Residue H268 coordinates a divalent metal cation. 4-CDP-2-C-methyl-D-erythritol 2-phosphate-binding positions include 282-284 (DIG), 358-361 (TTTE), F365, and R368.

This sequence in the N-terminal section; belongs to the IspD/TarI cytidylyltransferase family. IspD subfamily. The protein in the C-terminal section; belongs to the IspF family. A divalent metal cation serves as cofactor.

The enzyme catalyses 2-C-methyl-D-erythritol 4-phosphate + CTP + H(+) = 4-CDP-2-C-methyl-D-erythritol + diphosphate. The catalysed reaction is 4-CDP-2-C-methyl-D-erythritol 2-phosphate = 2-C-methyl-D-erythritol 2,4-cyclic diphosphate + CMP. The protein operates within isoprenoid biosynthesis; isopentenyl diphosphate biosynthesis via DXP pathway; isopentenyl diphosphate from 1-deoxy-D-xylulose 5-phosphate: step 2/6. It functions in the pathway isoprenoid biosynthesis; isopentenyl diphosphate biosynthesis via DXP pathway; isopentenyl diphosphate from 1-deoxy-D-xylulose 5-phosphate: step 4/6. In terms of biological role, bifunctional enzyme that catalyzes the formation of 4-diphosphocytidyl-2-C-methyl-D-erythritol from CTP and 2-C-methyl-D-erythritol 4-phosphate (MEP) (IspD), and catalyzes the conversion of 4-diphosphocytidyl-2-C-methyl-D-erythritol 2-phosphate (CDP-ME2P) to 2-C-methyl-D-erythritol 2,4-cyclodiphosphate (ME-CPP) with a corresponding release of cytidine 5-monophosphate (CMP) (IspF). The chain is Bifunctional enzyme IspD/IspF from Paramagnetospirillum magneticum (strain ATCC 700264 / AMB-1) (Magnetospirillum magneticum).